The primary structure comprises 25 residues: Caerin 2.1 (25 aa).

Expressed by the skin dorsal glands.

Its subcellular location is the secreted. In terms of biological role, antibacterial peptide with narrow spectrum of activity. Active against the Gram-negative bacterium P.multocida (MIC=25 ug/ml). Inhibits the formation of NO by neuronal nitric oxide synthase with an IC(50) of 9 ug/ml. This chain is Caerin 2.1, found in Litoria peronii (Emerald spotted tree frog).